The following is an 89-amino-acid chain: MSLTKEKKAEIINTFGGSDKNTGKTEVQIALYSRRISDLTGHLKEHPKDKHSRHGLLKLVGKRKSLLAYLKNTEIERYRQVLADLDLRK.

The protein belongs to the universal ribosomal protein uS15 family. Part of the 30S ribosomal subunit. Forms a bridge to the 50S subunit in the 70S ribosome, contacting the 23S rRNA.

In terms of biological role, one of the primary rRNA binding proteins, it binds directly to 16S rRNA where it helps nucleate assembly of the platform of the 30S subunit by binding and bridging several RNA helices of the 16S rRNA. Its function is as follows. Forms an intersubunit bridge (bridge B4) with the 23S rRNA of the 50S subunit in the ribosome. The chain is Small ribosomal subunit protein uS15 from Prosthecochloris aestuarii (strain DSM 271 / SK 413).